We begin with the raw amino-acid sequence, 750 residues long: Photosystem I P700 chlorophyll a apoprotein A1 (750 aa).

The next 8 helical transmembrane spans lie at 70-93 (VFSA…FHGA), 156-179 (LYCT…FHYH), 195-219 (LNHH…HVSL), 291-309 (IAHH…GHMY), 346-369 (WHAQ…HHMY), 385-411 (LSLF…IFMV), 433-455 (AIIS…LYIH), and 531-549 (FLVH…LILL). Positions 573 and 582 each coordinate [4Fe-4S] cluster. Transmembrane regions (helical) follow at residues 589–610 (HVFL…HFSW) and 664–686 (LSAY…MFLF). His675 lines the chlorophyll a' pocket. Residues Met683 and Tyr691 each coordinate chlorophyll a. Trp692 provides a ligand contact to phylloquinone. Residues 724–744 (AVGVTHYLLGGIATTWAFFLA) form a helical membrane-spanning segment.

The protein belongs to the PsaA/PsaB family. The PsaA/B heterodimer binds the P700 chlorophyll special pair and subsequent electron acceptors. PSI consists of a core antenna complex that captures photons, and an electron transfer chain that converts photonic excitation into a charge separation. The eukaryotic PSI reaction center is composed of at least 11 subunits. The cofactor is P700 is a chlorophyll a/chlorophyll a' dimer, A0 is one or more chlorophyll a, A1 is one or both phylloquinones and FX is a shared 4Fe-4S iron-sulfur center..

The protein resides in the plastid. Its subcellular location is the chloroplast thylakoid membrane. It carries out the reaction reduced [plastocyanin] + hnu + oxidized [2Fe-2S]-[ferredoxin] = oxidized [plastocyanin] + reduced [2Fe-2S]-[ferredoxin]. Its function is as follows. PsaA and PsaB bind P700, the primary electron donor of photosystem I (PSI), as well as the electron acceptors A0, A1 and FX. PSI is a plastocyanin-ferredoxin oxidoreductase, converting photonic excitation into a charge separation, which transfers an electron from the donor P700 chlorophyll pair to the spectroscopically characterized acceptors A0, A1, FX, FA and FB in turn. Oxidized P700 is reduced on the lumenal side of the thylakoid membrane by plastocyanin. The protein is Photosystem I P700 chlorophyll a apoprotein A1 of Panax ginseng (Korean ginseng).